We begin with the raw amino-acid sequence, 707 residues long: Caprin-1 (707 aa).

2 stretches are compositionally biased toward low complexity: residues 1–15 and 22–43; these read MPSATSHSGSGSKSS and GSSGSEAAAGAAAPASQHPATG. A disordered region spans residues 1–48; it reads MPSATSHSGSGSKSSGPPPPSGSSGSEAAAGAAAPASQHPATGTGAVQ. Pro2 carries the post-translational modification N-acetylproline. Ser10 bears the Phosphoserine mark. Residues 58–92 are a coiled coil; that stretch reads VIDKKLRNLEKKKGKLDDYQERMNKGERLNQDQLD. At Ser113 the chain carries Phosphoserine. Positions 123-151 form a coiled coil; the sequence is KTIKKTARREQLMREEAEQKRLKTVLELQ. Omega-N-methylarginine is present on Arg163. The span at 325 to 335 shows a compositional bias: low complexity; that stretch reads LQQQPQAASPS. Residues 325 to 347 form a disordered region; that stretch reads LQQQPQAASPSVPEPHSLTPVAQ. Ser333 and Ser341 each carry phosphoserine. The G3BP1-binding stretch occupies residues 358 to 379; it reads QDLMAQMQGPYNFIQDSMLDFE. 3 disordered regions span residues 412-496, 526-558, and 570-707; these read ESRL…AGTS, PANEPETLKQQSQYQATYNQSFSSQPHQVEQTE, and TYHG…QQVN. The span at 431–452 shows a compositional bias: polar residues; sequence PLVSSTSEGYTASQPLYQPSHA. Positions 453-462 are enriched in basic and acidic residues; sequence TEQRPQKEPM. Polar residues predominate over residues 465–474; that stretch reads IQATISLNTD. A compositionally biased stretch (low complexity) spans 475-489; the sequence is QTTASSSLPAASQPQ. Polar residues-rich tracts occupy residues 533–552 and 572–603; these read LKQQSQYQATYNQSFSSQPH and HGSQDQPHQVPGNHQQPPQQNTGFPRSSQPYY. Residue Tyr623 is modified to Phosphotyrosine. Residues Arg624 and Arg631 each carry the omega-N-methylarginine modification. Tyr634 and Tyr637 each carry phosphotyrosine. Arg638 is modified (omega-N-methylarginine). The span at 640–655 shows a compositional bias: polar residues; that stretch reads SFSNTPNSGYSQSQFT. O-linked (GlcNAc) serine glycosylation is found at Ser642 and Ser647. 4 positions are modified to phosphotyrosine: Tyr649, Tyr660, Tyr663, and Tyr668. 2 stretches are compositionally biased toward low complexity: residues 674-684 and 695-707; these read RGSGQSGPRGA and NRGMPQMNTQQVN. Arg696 bears the Asymmetric dimethylarginine; alternate mark. Position 696 is an omega-N-methylarginine; alternate (Arg696).

This sequence belongs to the caprin family. As to quaternary structure, may form homomultimers. Interacts with G3BP1; interaction is direct and promotes stress granule formation. Interacts with G3BP2; interaction is direct and promotes stress granule formation. Interacts with PQBP1. Interacts with DDX3X. Interacts (when phosphorylated by EPHA4) with FMR1; interaction with FMR1 promotes formation of a membraneless compartment. In terms of processing, tyrosine phosphorylation by EPHA4 promotes interaction with FMR1 and liquid-liquid phase separation (LLPS) for the formation of a membraneless compartment that concentrates mRNAs with associated regulatory factors. O-glycosylated (O-GlcNAcylated), in a cell cycle-dependent manner. O-glycosylation by OGT inhibit ability to undergo liquid-liquid phase separation (LLPS). In terms of tissue distribution, highest expression in thymus, spleen and brain (at protein level). Lower levels in kidney, muscle and liver (at protein level).

It is found in the cytoplasm. Its subcellular location is the cytoplasmic ribonucleoprotein granule. It localises to the cytosol. The protein resides in the cell projection. The protein localises to the dendrite. It is found in the lamellipodium. With respect to regulation, ability to mediate liquid-liquid phase separation is regulated by ATP: moderate concentrations of ATP enhance phase separation, whereas high concentrations of ATP lead to inhibition of phase separation. MRNA-binding protein that acts as a regulator of mRNAs transport, translation and/or stability, and which is involved in neurogenesis, synaptic plasticity in neurons and cell proliferation and migration in multiple cell types. Plays an essential role in cytoplasmic stress granule formation. Acts as an mRNA regulator by mediating formation of some phase-separated membraneless compartment: undergoes liquid-liquid phase separation upon binding to target mRNAs, leading to assemble mRNAs into cytoplasmic ribonucleoprotein granules that concentrate mRNAs with associated regulatory factors. Undergoes liquid-liquid phase separation following phosphorylation and interaction with FMR1, promoting formation of cytoplasmic ribonucleoprotein granules that concentrate mRNAs with factors that inhibit translation and mediate deadenylation of target mRNAs. In these cytoplasmic ribonucleoprotein granules, CAPRIN1 mediates recruitment of CNOT7 deadenylase, leading to mRNA deadenylation and degradation. Binds directly and selectively to MYC and CCND2 mRNAs. In neuronal cells, directly binds to several mRNAs associated with RNA granules, including BDNF, CAMK2A, CREB1, MAP2, NTRK2 mRNAs, as well as to GRIN1 and KPNB1 mRNAs, but not to rRNAs. In Mus musculus (Mouse), this protein is Caprin-1 (Caprin1).